Here is a 3075-residue protein sequence, read N- to C-terminus: MRGGVLLVLLLCVAAQCRQRGLFPAILNLASNAHISTNATCGEKGPEMFCKLVEHVPGRPVRNPQCRICDGNSANPRERHPISHAIDGTNNWWQSPSIQNGREYHWVTITLDLRQVFQVAYVIIKAANAPRPGNWILERSLDGTTFSPWQYYAVSDSECLSRYNITPRRGPPTYRADDEVICTSYYSRLVPLEHGEIHTSLINGRPSADDLSPKLLEFTSARYIRLRLQRIRTLNADLMTLSHREPKELDPIVTRRYYYSIKDISVGGMCICYGHASSCPWDETTKKLQCQCEHNTCGESCNRCCPGYHQQPWRPGTVSSGNTCEACNCHNKAKDCYYDESVAKQKKSLNTAGQFRGGGVCINCLQNTMGINCETCIDGYYRPHKVSPYEDEPCRPCNCDPVGSLSSVCIKDDLHSDLHNGKQPGQCPCKEGYTGEKCDRCQLGYKDYPTCVSCGCNPVGSASDEPCTGPCVCKENVEGKACDRCKPGFYNLKEKNPRGCSECFCFGVSDVCSSLSWPVGQVNSMSGWLVTDLISPRKIPSQQDALGGRHQVSINNTAVMQRLAPKYYWAAPEAYLGNKLTAFGGFLKYTVSYDIPVETVDSNLMSHADVIIKGNGLTLSTQAEGLSLQPYEEYLNVVRLVPENFQDFHSKRQIDRDQLMTVLANVTHLLIRANYNSAKMALYRLESVSLDIASSNAIDLVVAADVEHCECPQGYTGTSCESCLSGYYRVDGILFGGICQPCECHGHAAECNVHGVCIACAHNTTGVHCEQCLPGFYGEPSRGTPGDCQPCACPLTIASNNFSPTCHLNDGDEVVCDWCAPGYSGAWCERCADGYYGNPTVPGESCVPCDCSGNVDPSEAGHCDSVTGECLKCLGNTDGAHCERCADGFYGDAVTAKNCRACECHVKGSHSAVCHLETGLCDCKPNVTGQQCDQCLHGYYGLDSGHGCRPCNCSVAGSVSDGCTDEGQCHCVPGVAGKRCDRCAHGFYAYQDGSCTPCDCPHTQNTCDPETGECVCPPHTQGVKCEECEDGHWGYDAEVGCQACNCSLVGSTHHRCDVVTGHCQCKSKFGGRACDQCSLGYRDFPDCVPCDCDLRGTSGDACNLEQGLCGCVEETGACPCKENVFGPQCNECREGTFALRADNPLGCSPCFCSGLSHLCSELEDYVRTPVTLGSDQPLLRVVSQSNLRGTTEGVYYQAPDFLLDAATVRQHIRAEPFYWRLPQQFQGDQLMAYGGKLKYSVAFYSLDGVGTSNFEPQVLIKGGRIRKQVIYMDAPAPENGVRQEQEVAMRENFWKYFNSVSEKPVTREDFMSVLSDIEYILIKASYGQGLQQSRISDISMEVGRKAEKLHPEEEVASLLENCVCPPGTVGFSCQDCAPGYHRGKLPAGSDRGPRPLVAPCVPCSCNNHSDTCDPNTGKCLNCGDNTAGDHCDVCTSGYYGKVTGSASDCALCACPHSPPASFSPTCVLEGDHDFRCDACLLGYEGKHCERCSSSYYGNPQTPGGSCQKCDCNPHGSVHGDCDRTSGQCVCRLGASGLRCDECEPRHILMETDCVSCDDECVGVLLNDLDEIGDAVLSLNLTGIIPVPYGILSNLENTTKYLQESLLKENMQKDLGKIKLEGVAEETDNLQKKLTRMLASTQKVNRATERIFKESQDLAIAIERLQMSITEIMEKTTLNQTLDEDFLLPNSTLQNMQQNGTSLLEIMQIRDFTQLHQNATLELKAAEDLLSQIQENYQKPLEELEVLKEAASHVLSKHNNELKAAEALVREAEAKMQESNHLLLMVNANLREFSDKKLHVQEEQNLTSELIVQGRGLIDAAAAQTDAVQDALEHLEDHQDKLLLWSAKIRHHIDDLVMHMSQRNAVDLVYRAEDHAAEFQRLADVLYSGLENIRNVSLNATSAAYVHYNIQSLIEESEELARDAHRTVTETSLLSESLVSNGKAAVQRSSRFLKEGNNLSRKLPGIALELSELRNKTNRFQENAVEITRQTNESLLILRAIPKGIRDKGAKTKELATSASQSAVSTLRDVAGLSQELLNTSASLSRVNTTLRETHQLLQDSTMATLLAGRKVKDVEIQANLLFDRLKPLKMLEENLSRNLSEIKLLISQARKQAASIKVAVSADRDCIRAYQPQISSTNYNTLTLNVKTQEPDNLLFYLGSSTASDFLAVEMRRGRVAFLWDLGSGSTRLEFPDFPIDDNRWHSIHVARFGNIGSLSVKEMSSNQKSPTKTSKSPGTANVLDVNNSTLMFVGGLGGQIKKSPAVKVTHFKGCLGEAFLNGKSIGLWNYIEREGKCRGCFGSSQNEDPSFHFDGSGYSVVEKSLPATVTQIIMLFNTFSPNGLLLYLGSYGTKDFLSIELFRGRVKVMTDLGSGPITLLTDRRYNNGTWYKIAFQRNRKQGVLAVIDAYNTSNKETKQGETPGASSDLNRLDKDPIYVGGLPRSRVVRRGVTTKSFVGCIKNLEISRSTFDLLRNSYGVRKGCLLEPIRSVSFLKGGYIELPPKSLSPESEWLVTFATTNSSGIILAALGGDVEKRGDREEAHVPFFSVMLIGGNIEVHVNPGDGTGLRKALLHAPTGTCSDGQAHSISLVRNRRIITVQLDENNPVEMKLGTLVESRTINVSNLYVGGIPEGEGTSLLTMRRSFHGCIKNLIFNLELLDFNSAVGHEQVDLDTCWLSERPKLAPDAEDSKLLPEPRAFPEQCVVDAALEYVPGAHQFGLTQNSHFILPFNQSAVRKKLSVELSIRTFASSGLIYYMAHQNQADYAVLQLHGGRLHFMFDLGKGRTKVSHPALLSDGKWHTVKTDYVKRKGFITVDGRESPMVTVVGDGTMLDVEGLFYLGGLPSQYQARKIGNITHSIPACIGDVTVNSKQLDKDSPVSAFTVNRCYAVAQEGTYFDGSGYAALVKEGYKVQSDVNITLEFRTSSQNGVLLGISTAKVDAIGLELVDGKVLFHVNNGAGRITAAYEPKTATVLCDGKWHTLQANKSKHRITLIVDGNAVGAESPHTQSTSVDTNNPIYVGGYPAGVKQKCLRSQTSFRGCLRKLALIKSPQVQSFDFSRAFELHGVFLHSCPGTES.

An N-terminal signal peptide occupies residues 1-17 (MRGGVLLVLLLCVAAQC). Residues 18-269 (RQRGLFPAIL…SIKDISVGGM (252 aa)) enclose the Laminin N-terminal domain. 16 disulfide bridges follow: C270–C279, C272–C290, C292–C301, C304–C324, C327–C336, C329–C361, C364–C373, C376–C394, C397–C409, C399–C427, C429–C438, C441–C451, C454–C467, C456–C471, C473–C482, and C485–C500. 4 Laminin EGF-like domains span residues 270–326 (CICY…TCEA), 327–396 (CNCH…PCRP), 397–453 (CNCD…TCVS), and 454–502 (CGCN…GCSE). Residues 503–512 (CFCFGVSDVC) form the Laminin EGF-like 5; first part domain. One can recognise a Laminin IV type A 1 domain in the interval 516-708 (SWPVGQVNSM…DLVVAADVEH (193 aa)). A glycan (N-linked (GlcNAc...) asparagine) is linked at N665. The Laminin EGF-like 5; second part domain maps to 709–741 (CECPQGYTGTSCESCLSGYYRVDGILFGGICQP). Cystine bridges form between C742/C751, C744/C757, C760/C769, C772/C788, C791/C806, C793/C816, C819/C828, C831/C846, C849/C863, C851/C870, C873/C882, C885/C899, C902/C914, C904/C921, C923/C932, C935/C948, C951/C963, C953/C969, C971/C980, C983/C995, C998/C1007, C1000/C1014, C1016/C1025, C1028/C1041, C1044/C1056, C1046/C1063, C1065/C1074, C1077/C1087, C1090/C1102, C1092/C1118, C1120/C1129, and C1132/C1147. 8 consecutive Laminin EGF-like domains span residues 742–790 (CECH…DCQP), 791–848 (CACP…SCVP), 849–901 (CDCS…NCRA), 902–950 (CECH…GCRP), 951–997 (CNCS…SCTP), 998–1043 (CDCP…GCQA), 1044–1089 (CNCS…DCVP), and 1090–1149 (CDCD…GCSP). One can recognise a Laminin EGF-like 14; first part domain in the interval 1150–1159 (CFCSGLSHLC). Residues 1170–1361 (VTLGSDQPLL…EEEVASLLEN (192 aa)) enclose the Laminin IV type A 2 domain. Residues 1362 to 1402 (CVCPPGTVGFSCQDCAPGYHRGKLPAGSDRGPRPLVAPCVP) enclose the Laminin EGF-like 14; second part domain. Cystine bridges form between C1403–C1412, C1405–C1419, C1422–C1431, C1434–C1449, C1452–C1466, C1454–C1476, C1479–C1488, C1491–C1506, C1509–C1521, C1511–C1528, C1530–C1539, and C1542–C1553. Laminin EGF-like domains follow at residues 1403 to 1451 (CSCN…DCAL), 1452 to 1508 (CACP…SCQK), and 1509 to 1555 (CDCN…DCVS). The interval 1556–2116 (CDDECVGVLL…SQARKQAASI (561 aa)) is domain II and I. N-linked (GlcNAc...) asparagine glycans are attached at residues N1579, N1689, N1717, N2047, and N2243. The stretch at 1706–1783 (MQIRDFTQLH…KMQESNHLLL (78 aa)) forms a coiled coil. Laminin G-like domains lie at 2117-2297 (KVAV…CRGC), 2305-2481 (DPSF…RKGC), 2486-2673 (IRSV…LDTC), 2713-2885 (AHQF…VNRC), and 2890-3070 (QEGT…LHSC). Disulfide bonds link C2271–C2297 and C2457–C2481. The Cell attachment site signature appears at 2534–2536 (RGD). Disulfide bonds link C2646–C2673, C2860–C2885, and C3039–C3070.

Laminin is a complex glycoprotein, consisting of three different polypeptide chains (alpha, beta, gamma), which are bound to each other by disulfide bonds into a cross-shaped molecule comprising one long and three short arms with globules at each end. Alpha-1 is a subunit of laminin-1 (laminin-111 or EHS laminin) and laminin-3 (laminin-121 or S-laminin). Post-translationally, tyrosine phosphorylated by PKDCC/VLK.

The protein localises to the secreted. The protein resides in the extracellular space. It localises to the extracellular matrix. Its subcellular location is the basement membrane. Functionally, binding to cells via a high affinity receptor, laminin is thought to mediate the attachment, migration and organization of cells into tissues during embryonic development by interacting with other extracellular matrix components. The polypeptide is Laminin subunit alpha-1 (LAMA1) (Homo sapiens (Human)).